Reading from the N-terminus, the 291-residue chain is Pituitary-specific positive transcription factor 1 (291 aa).

Residues 5-13 (AFTSADTFI) carry the 9aaTAD motif. The 75-residue stretch at 124–198 (MDSPEIRELE…ILSKWLEEAE (75 aa)) folds into the POU-specific domain. A DNA-binding region (homeobox) is located at residues 214-273 (KRKRRTTISIAAKDALERHFGEQNKPSSQEIMRMAEELNLEKEVVRVWFCNRRQREKRVK).

This sequence belongs to the POU transcription factor family. Class-1 subfamily. In terms of assembly, interacts with PITX1. Interacts with LHX3. Interacts with ELK1.

The protein resides in the nucleus. Functionally, transcription factor involved in the specification of the lactotrope, somatotrope, and thyrotrope phenotypes in the developing anterior pituitary. Activates growth hormone and prolactin genes. Specifically binds to the consensus sequence 5'-TAAAT-3'. The chain is Pituitary-specific positive transcription factor 1 (POU1F1) from Macaca mulatta (Rhesus macaque).